A 330-amino-acid polypeptide reads, in one-letter code: Quinone oxidoreductase (330 aa).

Position 2 is an N-acetylalanine (A2). At K23 the chain carries N6-acetyllysine. Residues Y53, 158–161, G181, H200, N229, 246–249, and 269–271 contribute to the NADP(+) site; these read SGGV, VGSK, and VTL. S248 bears the Phosphoserine mark.

It belongs to the zinc-containing alcohol dehydrogenase family. Quinone oxidoreductase subfamily. In terms of assembly, homotetramer.

The protein resides in the cytoplasm. It catalyses the reaction 2 a quinone + NADPH + H(+) = 2 a 1,4-benzosemiquinone + NADP(+). In terms of biological role, does not have alcohol dehydrogenase activity. Binds NADP and acts through a one-electron transfer process. Orthoquinones, such as 1,2-naphthoquinone or 9,10-phenanthrenequinone, are the best substrates (in vitro). May act in the detoxification of xenobiotics. Interacts with (AU)-rich elements (ARE) in the 3'-UTR of target mRNA species and enhances their stability. NADPH binding interferes with mRNA binding. The protein is Quinone oxidoreductase (CRYZ) of Lama guanicoe (Guanaco).